A 317-amino-acid polypeptide reads, in one-letter code: COP9 signalosome complex subunit 6a (317 aa).

The region spanning 30-164 is the MPN domain; sequence TQLNPPASIC…VTIYESELHV (135 aa).

The protein belongs to the peptidase M67A family. CSN6 subfamily. In terms of assembly, component of the CSN complex, probably composed of CSN1, CSN2, CSN3, CSN4, CSN5 (CSN5A or CSN5B), CSN6 (CSN6A or CSN6B), CSN7 and CSN8. Interacts with itself. In the complex, it probably interacts directly with CSN4 and CSN5A or CSN5B. Interacts with CSN7 (via C-terminal tail). Binds to the translation initiation factors TIF3E1.

Its subcellular location is the cytoplasm. The protein localises to the nucleus. Component of the COP9 signalosome complex (CSN), a complex involved in various cellular and developmental processes such as photomorphogenesis and auxin and jasmonate responses. The CSN complex is an essential regulator of the ubiquitin (Ubl) conjugation pathway by mediating the deneddylation of the cullin subunits of SCF-type E3 ligase complexes, leading to decrease the Ubl ligase activity of SCF. It is involved in repression of photomorphogenesis in darkness by regulating the activity of COP1-containing Ubl ligase complexes. The complex is also required for degradation of PSIAA6 by regulating the activity of the Ubl ligase SCF-TIR complex. Essential for the structural integrity of the CSN holocomplex. The polypeptide is COP9 signalosome complex subunit 6a (Arabidopsis thaliana (Mouse-ear cress)).